The sequence spans 503 residues: Aminoaldehyde dehydrogenase 2, peroxisomal (503 aa).

The Na(+) site is built by I28, D99, and L189. G238 to K245 contributes to the NAD(+) binding site. The active-site Proton acceptor is the E260. NAD(+) is bound by residues C294 and E393. C294 acts as the Nucleophile in catalysis. The Microbody targeting signal signature appears at S501 to L503.

This sequence belongs to the aldehyde dehydrogenase family. As to expression, expressed in leaves, flowers and fruits.

The protein resides in the peroxisome. The catalysed reaction is 4-aminobutanal + NAD(+) + H2O = 4-aminobutanoate + NADH + 2 H(+). The enzyme catalyses 3-aminopropanal + NAD(+) + H2O = beta-alanine + NADH + 2 H(+). It participates in amine and polyamine biosynthesis; betaine biosynthesis via choline pathway; betaine from betaine aldehyde: step 1/1. Functionally, dehydrogenase that catalyzes the oxidation of several aminoaldehydes. Metabolizes and detoxifies aldehyde products of polyamine degradation to non-toxic amino acids. Catalyzes the oxidation of 4-aminobutanal and 3-aminopropanal to 4-aminobutanoate and beta-alanine, respectively. The protein is Aminoaldehyde dehydrogenase 2, peroxisomal of Malus domestica (Apple).